The primary structure comprises 68 residues: Tabimmunregulin 12 (68 aa).

An N-terminal signal peptide occupies residues 1 to 24 (MLFKSYVYFLAGLLLVGLFTSCDA). Residues 25-38 (DAQYEELVPGFFRK) constitute a propeptide that is removed on maturation.

Expressed in salivary glands.

The protein resides in the secreted. Its function is as follows. Horsefly salivary gland immunosuppressant protein that likely inhibits the host inflammatory response by regulation of anti- and pro-inflammatory cytokines. When tested on mouse splenocytes in the presence of LPS, it increases the secretion of the proinflammatory cytokine interleukin-10 (IL10) and decreases the secretion of the proinflammatory cytokine interferon-gamma (IFNG) in a dose-dependent manner. This Tabanus yao (Horsefly) protein is Tabimmunregulin 12.